We begin with the raw amino-acid sequence, 206 residues long: MSALANRRARVERKTKESEIVVDLDLDGTGVVDIDTGVPFFDHMLTSLGSHASFDLTVHAKGDIEIEGHHTVEDTAIVLGQALGQALGDKKGIRRFGDAFIPMDESLAHAAVDVSGRPYFVHTGEPESMVSFTIAGTGAPYHTVINRHVFESLAFNARIALHVRTLYGRDPHHITEAQYKAVARALRQAVEYDARVTGVPSTKGTL.

Belongs to the imidazoleglycerol-phosphate dehydratase family.

It localises to the cytoplasm. The catalysed reaction is D-erythro-1-(imidazol-4-yl)glycerol 3-phosphate = 3-(imidazol-4-yl)-2-oxopropyl phosphate + H2O. Its pathway is amino-acid biosynthesis; L-histidine biosynthesis; L-histidine from 5-phospho-alpha-D-ribose 1-diphosphate: step 6/9. The protein is Imidazoleglycerol-phosphate dehydratase of Mycolicibacterium smegmatis (strain ATCC 700084 / mc(2)155) (Mycobacterium smegmatis).